The primary structure comprises 380 residues: Chaperone protein DnaJ (380 aa).

The region spanning 5–70 (DYYEILGVTK…QKRAAYDRFG (66 aa)) is the J domain. The CR-type zinc-finger motif lies at 137-215 (GKAETIKIPT…CQGAGRVNRE (79 aa)). Positions 150, 153, 167, 170, 189, 192, 203, and 206 each coordinate Zn(2+). 4 CXXCXGXG motif repeats span residues 150–157 (CEVCDGSG), 167–174 (CPTCAGYG), 189–196 (CPNCHGRG), and 203–210 (CTACQGAG).

This sequence belongs to the DnaJ family. Homodimer. Zn(2+) is required as a cofactor.

It is found in the cytoplasm. Its function is as follows. Participates actively in the response to hyperosmotic and heat shock by preventing the aggregation of stress-denatured proteins and by disaggregating proteins, also in an autonomous, DnaK-independent fashion. Unfolded proteins bind initially to DnaJ; upon interaction with the DnaJ-bound protein, DnaK hydrolyzes its bound ATP, resulting in the formation of a stable complex. GrpE releases ADP from DnaK; ATP binding to DnaK triggers the release of the substrate protein, thus completing the reaction cycle. Several rounds of ATP-dependent interactions between DnaJ, DnaK and GrpE are required for fully efficient folding. Also involved, together with DnaK and GrpE, in the DNA replication of plasmids through activation of initiation proteins. This chain is Chaperone protein DnaJ, found in Methylobacterium radiotolerans (strain ATCC 27329 / DSM 1819 / JCM 2831 / NBRC 15690 / NCIMB 10815 / 0-1).